A 208-amino-acid polypeptide reads, in one-letter code: Probable GTP-binding protein EngB (208 aa).

One can recognise an EngB-type G domain in the interval Leu23–Thr205. GTP is bound by residues Gly31–Ser38, Gly57–Leu61, Asp84–Gly87, Thr154–Asp157, and Phe182–Ala184. Positions 38 and 59 each coordinate Mg(2+).

This sequence belongs to the TRAFAC class TrmE-Era-EngA-EngB-Septin-like GTPase superfamily. EngB GTPase family. Requires Mg(2+) as cofactor.

In terms of biological role, necessary for normal cell division and for the maintenance of normal septation. This is Probable GTP-binding protein EngB from Helicobacter pylori (strain Shi470).